A 507-amino-acid polypeptide reads, in one-letter code: Rhomboid protease GluP (507 aa).

Helical transmembrane passes span F179 to G199, I229 to G249, F261 to P281, P283 to L303, and T312 to S332. S288 (nucleophile) is an active-site residue. The active-site Charge relay system is the H339. A run of 2 helical transmembrane segments spans residues I340–A360 and L365–S385. 2 TPR repeats span residues A424–D457 and H458–E491.

It belongs to the peptidase S54 family.

It localises to the cell membrane. It catalyses the reaction Cleaves type-1 transmembrane domains using a catalytic dyad composed of serine and histidine that are contributed by different transmembrane domains.. Its activity is regulated as follows. Inhibited by dichloroisocoumarin (DCI) and N-p-tosyl-L-phenylalanine chloromethyl ketone (TPCK), but not by other serine protease inhibitors such as sulfonyl fluoride PMSF and 4-(2-aminoethyl)benzenesulfonyl fluoride (AEBSF). Functionally, rhomboid-type serine protease that catalyzes intramembrane proteolysis. Important for normal cell division and sporulation. May act as a glucose exporter. In Bacillus subtilis (strain 168), this protein is Rhomboid protease GluP (gluP).